A 134-amino-acid polypeptide reads, in one-letter code: Mini-ribonuclease 3 (134 aa).

The active site involves aspartate 22.

Belongs to the MrnC RNase family. As to quaternary structure, homodimer. The cofactor is Mg(2+).

The protein resides in the cytoplasm. In terms of biological role, involved in correct processing of both the 5' and 3' ends of 23S rRNA precursor. Processes 30S rRNA precursor transcript even in absence of ribonuclease 3 (Rnc); Rnc processes 30S rRNA into smaller rRNA precursors. The protein is Mini-ribonuclease 3 of Staphylococcus aureus (strain NCTC 8325 / PS 47).